Consider the following 238-residue polypeptide: Dolichyldiphosphatase 1 (238 aa).

Transmembrane regions (helical) follow at residues 33–53 (LAYL…LIIF), 100–120 (PSSH…FLYL), 130–150 (FLDL…AFLV), and 162–182 (WSQV…WFIF).

The protein belongs to the dolichyldiphosphatase family.

It localises to the endoplasmic reticulum membrane. The enzyme catalyses a di-trans,poly-cis-dolichyl diphosphate + H2O = a di-trans,poly-cis-dolichyl phosphate + phosphate + H(+). Its pathway is protein modification; protein glycosylation. Its function is as follows. Required for efficient N-glycosylation. Necessary for maintaining optimal levels of dolichol-linked oligosaccharides. Hydrolyzes dolichyl pyrophosphate at a very high rate and dolichyl monophosphate at a much lower rate. Does not act on phosphatidate. This Plecturocebus moloch (Dusky titi monkey) protein is Dolichyldiphosphatase 1 (DOLPP1).